Here is a 513-residue protein sequence, read N- to C-terminus: ATP synthase subunit alpha (513 aa).

Position 169-176 (169-176) interacts with ATP; it reads GDRQVGKT.

The protein belongs to the ATPase alpha/beta chains family. F-type ATPases have 2 components, CF(1) - the catalytic core - and CF(0) - the membrane proton channel. CF(1) has five subunits: alpha(3), beta(3), gamma(1), delta(1), epsilon(1). CF(0) has three main subunits: a(1), b(2) and c(9-12). The alpha and beta chains form an alternating ring which encloses part of the gamma chain. CF(1) is attached to CF(0) by a central stalk formed by the gamma and epsilon chains, while a peripheral stalk is formed by the delta and b chains.

The protein localises to the cell inner membrane. It carries out the reaction ATP + H2O + 4 H(+)(in) = ADP + phosphate + 5 H(+)(out). Functionally, produces ATP from ADP in the presence of a proton gradient across the membrane. The alpha chain is a regulatory subunit. The polypeptide is ATP synthase subunit alpha (Aeromonas hydrophila subsp. hydrophila (strain ATCC 7966 / DSM 30187 / BCRC 13018 / CCUG 14551 / JCM 1027 / KCTC 2358 / NCIMB 9240 / NCTC 8049)).